The sequence spans 312 residues: tRNA-cytidine(32) 2-sulfurtransferase (312 aa).

The short motif at 39 to 44 is the PP-loop motif element; sequence SGGKDS. [4Fe-4S] cluster contacts are provided by Cys114, Cys117, and Cys205.

Belongs to the TtcA family. In terms of assembly, homodimer. Mg(2+) is required as a cofactor. [4Fe-4S] cluster serves as cofactor.

It localises to the cytoplasm. The catalysed reaction is cytidine(32) in tRNA + S-sulfanyl-L-cysteinyl-[cysteine desulfurase] + AH2 + ATP = 2-thiocytidine(32) in tRNA + L-cysteinyl-[cysteine desulfurase] + A + AMP + diphosphate + H(+). It participates in tRNA modification. In terms of biological role, catalyzes the ATP-dependent 2-thiolation of cytidine in position 32 of tRNA, to form 2-thiocytidine (s(2)C32). The sulfur atoms are provided by the cysteine/cysteine desulfurase (IscS) system. The polypeptide is tRNA-cytidine(32) 2-sulfurtransferase (Ralstonia nicotianae (strain ATCC BAA-1114 / GMI1000) (Ralstonia solanacearum)).